Consider the following 316-residue polypeptide: 2,3-dihydroxyphenylpropionate/2,3-dihydroxicinnamic acid 1,2-dioxygenase (316 aa).

Histidine 118 (proton donor) is an active-site residue. Residue histidine 182 is the Proton acceptor of the active site.

It belongs to the LigB/MhpB extradiol dioxygenase family. Homotetramer. It depends on Fe(2+) as a cofactor.

The catalysed reaction is 3-(2,3-dihydroxyphenyl)propanoate + O2 = (2Z,4E)-2-hydroxy-6-oxonona-2,4-dienedioate + H(+). The enzyme catalyses (2E)-3-(2,3-dihydroxyphenyl)prop-2-enoate + O2 = (2Z,4E,7E)-2-hydroxy-6-oxonona-2,4,7-trienedioate + H(+). It participates in aromatic compound metabolism; 3-phenylpropanoate degradation. In terms of biological role, catalyzes the non-heme iron(II)-dependent oxidative cleavage of 2,3-dihydroxyphenylpropionic acid and 2,3-dihydroxicinnamic acid into 2-hydroxy-6-ketononadienedioate and 2-hydroxy-6-ketononatrienedioate, respectively. This chain is 2,3-dihydroxyphenylpropionate/2,3-dihydroxicinnamic acid 1,2-dioxygenase, found in Mycolicibacterium vanbaalenii (strain DSM 7251 / JCM 13017 / BCRC 16820 / KCTC 9966 / NRRL B-24157 / PYR-1) (Mycobacterium vanbaalenii).